A 1167-amino-acid polypeptide reads, in one-letter code: ATP-dependent helicase/nuclease subunit A (1167 aa).

The UvrD-like helicase ATP-binding domain occupies 2 to 451 (KNWTAEQMRA…IELSLNFRSR (450 aa)). 23–30 (AAAGAGKT) serves as a coordination point for ATP. Residues 478–768 (KAFLKKGADY…RVMSVHKSKG (291 aa)) enclose the UvrD-like helicase C-terminal domain.

It belongs to the helicase family. AddA subfamily. In terms of assembly, heterodimer of AddA and AddB/RexB. Mg(2+) is required as a cofactor.

The enzyme catalyses Couples ATP hydrolysis with the unwinding of duplex DNA by translocating in the 3'-5' direction.. It carries out the reaction ATP + H2O = ADP + phosphate + H(+). The heterodimer acts as both an ATP-dependent DNA helicase and an ATP-dependent, dual-direction single-stranded exonuclease. Recognizes the chi site generating a DNA molecule suitable for the initiation of homologous recombination. The AddA nuclease domain is required for chi fragment generation; this subunit has the helicase and 3' -&gt; 5' nuclease activities. This Carboxydothermus hydrogenoformans (strain ATCC BAA-161 / DSM 6008 / Z-2901) protein is ATP-dependent helicase/nuclease subunit A.